We begin with the raw amino-acid sequence, 423 residues long: DUF21 domain-containing protein At2g14520 (423 aa).

Over 1 to 11 the chain is Extracellular; that stretch reads MAVEYECCGTS. A CNNM transmembrane domain is found at 8–191; the sequence is CGTSFFIHIA…GKGGELTHDE (184 aa). Residues 12–32 form a helical membrane-spanning segment; that stretch reads FFIHIAVIVLLVLFAGLMSGL. Residues 33 to 70 are Cytoplasmic-facing; that stretch reads TLGLMSMSLVDLEVLAKSGTPRDRIHAAKILPVVKNQH. A helical transmembrane segment spans residues 71–91; the sequence is LLLCTLLICNAAAMEALPIFL. Over 92–94 the chain is Extracellular; sequence DAL. Residues 95–115 traverse the membrane as a helical segment; the sequence is VTAWGAILISVTLILLFGEII. The Cytoplasmic segment spans residues 116–136; it reads PQSVCSRHGLAIGATVAPFVR. A helical membrane pass occupies residues 137-157; sequence VLVWICLPVAWPISKLLDFLL. Over 158–423 the chain is Extracellular; sequence GHGRVALFRR…DETDHHFEDL (266 aa). Residues 210 to 271 form the CBS 1 domain; it reads MTPISDTFVI…TINPDEEIQV (62 aa). N-linked (GlcNAc...) asparagine glycans are attached at residues Asn273 and Asn322. 2 CBS domains span residues 275–332 and 356–415; these read TIRR…RVDV and PNRA…IFDE.

The protein localises to the membrane. In Arabidopsis thaliana (Mouse-ear cress), this protein is DUF21 domain-containing protein At2g14520 (CBSDUF3).